A 220-amino-acid chain; its full sequence is Ripening-related protein grip22 (220 aa).

An N-terminal signal peptide occupies residues 1-27 (MAKSALVWLASVCLVFNILSLPFLALG).

Belongs to the kiwellin family. Expressed in ripening fruits.

It is found in the secreted. This chain is Ripening-related protein grip22 (grip22), found in Vitis vinifera (Grape).